The chain runs to 184 residues: Uroplakin-2 (184 aa).

The N-terminal stretch at 1 to 25 is a signal peptide; that stretch reads MASPLPVRTLPLILILLAVLAPGAS. Residues 26-84 constitute a propeptide that is removed on maturation; the sequence is DFNISSLSGPLSPALTESLLVALPPCHLTGGNATLMVRRANDSKVVKSSFMVPPCRGRR. Asn-28, Asn-57, and Asn-66 each carry an N-linked (GlcNAc...) asparagine glycan. At 85-155 the chain is on the lumenal side; the sequence is ELVSVVDSGS…IGLGMARTGG (71 aa). Residues 156–180 form a helical membrane-spanning segment; sequence MVVITVLLSVAMFLLVVGFITALAL. Topologically, residues 181–184 are cytoplasmic; the sequence is GARK.

It belongs to the uroplakin-2 family. As to quaternary structure, interacts with uroplakin-1a (UPK1A). Expressed only in the urothelium. Localizes to urothelial superficial cells.

The protein resides in the cell membrane. Its function is as follows. Component of the asymmetric unit membrane (AUM); a highly specialized biomembrane elaborated by terminally differentiated urothelial cells. May play an important role in regulating the assembly of the AUM. This Sus scrofa (Pig) protein is Uroplakin-2 (UPK2).